Here is a 1087-residue protein sequence, read N- to C-terminus: Band 4.1-like protein 3 (1087 aa).

Residue M1 is modified to N-acetylmethionine. The interval 1–43 (MTTESGSDSESKPDQEAEPQEAAGAQGRAGAPVPEPPKEEQQQ) is disordered. Position 2 is an N-acetylthreonine; in Band 4.1-like protein 3, N-terminally processed (T2). Residues 20-32 (QEAAGAQGRAGAP) show a composition bias toward low complexity. Residue S88 is modified to Phosphoserine. The FERM domain occupies 110 to 391 (MQCKVILLDG…EHHTFFRLLL (282 aa)). The tract at residues 394-513 (APPKKFLTLG…PGLGTDSCPL (120 aa)) is hydrophilic. Residues S420, S443, and S460 each carry the phosphoserine modification. A compositionally biased stretch (polar residues) spans 459 to 469 (ISQTNLITTVT). 4 disordered regions span residues 459 to 529 (ISQT…TELR), 541 to 563 (GYEP…GPGR), 675 to 715 (SASL…EDAE), and 937 to 965 (SETL…SPGG). T469 and T492 each carry phosphothreonine. A spectrin--actin-binding region spans residues 514–860 (SPPSTHCAPT…VVQETVLVEE (347 aa)). Residues 516 to 526 (PSTHCAPTSPT) are compositionally biased toward polar residues. Acidic residues predominate over residues 681-691 (DPSDSSEEETD). The segment covering 698 to 707 (AADGETTATE) has biased composition (low complexity). T706 carries the post-translational modification Phosphothreonine. Phosphoserine occurs at positions 708, 960, and 962. Residues 861 to 1083 (RRVVHASGDA…VHKETEITPE (223 aa)) form a C-terminal (CTD) region. A compositionally biased stretch (polar residues) spans 947 to 960 (ESSTVKTETISFGS). T1081 bears the Phosphothreonine mark.

As to quaternary structure, interacts (via FERM domain) with CADM1. Interacts (via FERM domain) with PRMT3; the interaction is direct and inhibits the protein-arginine N-methyltransferase activity of PRMT3. Interacts with PRMT5. Interacts with PRMT6. In terms of tissue distribution, expressed at high levels in brain, with lower levels in kidney, intestine, and testis. Detected in lung.

It localises to the cytoplasm. The protein resides in the cytoskeleton. The protein localises to the cell junction. Its subcellular location is the cell membrane. In terms of biological role, tumor suppressor that inhibits cell proliferation and promotes apoptosis. Modulates the activity of protein arginine N-methyltransferases, including PRMT3 and PRMT5. This chain is Band 4.1-like protein 3, found in Homo sapiens (Human).